Reading from the N-terminus, the 96-residue chain is Large ribosomal subunit protein bL21 (96 aa).

It belongs to the bacterial ribosomal protein bL21 family. As to quaternary structure, part of the 50S ribosomal subunit. Contacts protein L20.

Functionally, this protein binds to 23S rRNA in the presence of protein L20. The sequence is that of Large ribosomal subunit protein bL21 from Sulfurihydrogenibium sp. (strain YO3AOP1).